Here is a 782-residue protein sequence, read N- to C-terminus: MSINLTVDIYIYLLSNARSVCGKQRSKQLYFLFSPKHYWRISHISLQRGFHTNIIRCKWTKSEAHSCSKHCYSPSNHGLHIGILKLSTSAPKGLTKVNICMSRIKSTLNSVSKAVFGNQNEMISRLAQFKPSSQILRKVSDSGWLKQKNIKQAIKSLKKYSDKSAEKSPFPEEKSHIIDKEEDIGKRSLFHYTSSITTKFGDSFYFLSNHINSYFKRKEKMSQQKENEHFRDKSELEDKKVEEGKLRSPDPGILAYKPGSESVHTVDKPTSPSAIPDVLQVSTKQSIANFLSRPTEGVQALVGGYIGGLVPKLKYDSKSQSEEQEEPAKTDQAVSKDRNAEEKKRLSLQREKIIARVSIDNRTRALVQALRRTTDPKLCITRVEELTFHLLEFPEGKGVAVKERIIPYLLRLRQIKDETLQAAVREILALIGYVDPVKGRGIRILSIDGGGTRGVVALQTLRKLVELTQKPVHQLFDYICGVSTGAILAFMLGLFHMPLDECEELYRKLGSDVFSQNVIVGTVKMSWSHAFYDSQTWENILKDRMGSALMIETARNPTCPKVAAVSTIVNRGITPKAFVFRNYGHFPGINSHYLGGCQYKMWQAIRASSAAPGYFAEYALGNDLHQDGGLLLNNPSALAMHECKCLWPDVPLECIVSLGTGRYESDVRNTVTYTSLKTKLSNVINSATDTEEVHIMLDGLLPPDTYFRFNPVMCENIPLDESRNEKLDQLQLEGLKYIERNEQKMKKVAKILSQEKTTLQKINDWIKLKTDMYEGLPFFSKL.

An N-linked (GlcNAc...) asparagine glycan is attached at asparagine 4. 2 disordered regions span residues 219 to 275 (EKMS…PSAI) and 317 to 343 (SKSQ…AEEK). Residues 220 to 248 (KMSQQKENEHFRDKSELEDKKVEEGKLRS) are compositionally biased toward basic and acidic residues. Asparagine 361 carries an N-linked (GlcNAc...) asparagine glycan. Residues 445–640 (LSIDGGGTRG…LLNNPSALAM (196 aa)) enclose the PNPLA domain. The GXGXXG signature appears at 449-454 (GGGTRG). The chain crosses the membrane as a helical span at residues 475-495 (LFDYICGVSTGAILAFMLGLF). A GXSXG motif is present at residues 481–485 (GVSTG). The active-site Nucleophile is the serine 483. Residue aspartate 627 is the Proton acceptor of the active site. The DGA/G motif lies at 627-629 (DGG). Residue lysine 736 is modified to N6-succinyllysine.

In terms of tissue distribution, expressed in parenchymal tissues including heart, skeletal muscle, placenta, brain, liver and pancreas. Also expressed in bronchial epithelial cells and kidney. Highest expression is observed in skeletal muscle and heart.

The protein resides in the endoplasmic reticulum membrane. Its subcellular location is the mitochondrion membrane. The protein localises to the peroxisome membrane. The catalysed reaction is a 1,2-diacyl-sn-glycero-3-phosphocholine + H2O = a 1-acyl-sn-glycero-3-phosphocholine + a fatty acid + H(+). It catalyses the reaction a 1,2-diacyl-sn-glycero-3-phosphocholine + H2O = a 2-acyl-sn-glycero-3-phosphocholine + a fatty acid + H(+). It carries out the reaction a 1,2-diacyl-sn-glycero-3-phosphoethanolamine + H2O = a 1-acyl-sn-glycero-3-phosphoethanolamine + a fatty acid + H(+). The enzyme catalyses a 1-O-(1Z-alkenyl)-2-acyl-sn-glycero-3-phosphocholine + H2O = a 1-O-(1Z-alkenyl)-sn-glycero-3-phosphocholine + a fatty acid + H(+). The catalysed reaction is a 1-acyl-sn-glycero-3-phosphocholine + H2O = sn-glycerol 3-phosphocholine + a fatty acid + H(+). It catalyses the reaction 1-acyl-2-(9Z,12Z)-octadecadienoyl-sn-glycero-3-phosphocholine + H2O = a 1-acyl-sn-glycero-3-phosphocholine + (9Z,12Z)-octadecadienoate + H(+). It carries out the reaction 1-acyl-2-(5Z,8Z,11Z,14Z-eicosatetraenoyl)-sn-glycero-3-phosphocholine + H2O = a 1-acyl-sn-glycero-3-phosphocholine + (5Z,8Z,11Z,14Z)-eicosatetraenoate + H(+). The enzyme catalyses 1-hexadecanoyl-2-(5Z,8Z,11Z,14Z-eicosatetraenoyl)-sn-glycero-3-phosphocholine + H2O = 1-hexadecanoyl-sn-glycero-3-phosphocholine + (5Z,8Z,11Z,14Z)-eicosatetraenoate + H(+). The catalysed reaction is 1-octadecanoyl-2-(9Z-octadecenoyl)-sn-glycero-3-phosphocholine + H2O = 1-octadecanoyl-sn-glycero-3-phosphocholine + (9Z)-octadecenoate + H(+). It catalyses the reaction 1-hexadecanoyl-2-(9Z-octadecenoyl)-sn-glycero-3-phosphocholine + H2O = 1-hexadecanoyl-sn-glycero-3-phosphocholine + (9Z)-octadecenoate + H(+). It carries out the reaction 1-hexadecanoyl-2-(9Z,12Z-octadecadienoyl)-sn-glycero-3-phosphocholine + H2O = (9Z,12Z)-octadecadienoate + 1-hexadecanoyl-sn-glycero-3-phosphocholine + H(+). The enzyme catalyses 1-acyl-2-(9Z,12Z)-octadecadienoyl-sn-glycero-3-phosphoethanolamine + H2O = a 1-acyl-sn-glycero-3-phosphoethanolamine + (9Z,12Z)-octadecadienoate + H(+). The catalysed reaction is 1-acyl-2-(5Z,8Z,11Z,14Z)-eicosatetraenoyl-sn-glycero-3-phosphoethanolamine + H2O = a 1-acyl-sn-glycero-3-phosphoethanolamine + (5Z,8Z,11Z,14Z)-eicosatetraenoate + H(+). It catalyses the reaction 1-hexadecanoyl-2-(5Z,8Z,11Z,14Z-eicosatetraenoyl)-sn-glycero-3-phosphoethanolamine + H2O = 1-hexadecanoyl-sn-glycero-3-phosphoethanolamine + (5Z,8Z,11Z,14Z)-eicosatetraenoate + H(+). It carries out the reaction 1-hexadecanoyl-2-(5Z,8Z,11Z,14Z-eicosatetraenoyl)-sn-glycero-3-phosphocholine + H2O = 2-(5Z,8Z,11Z,14Z)-eicosatetraenoyl-sn-glycero-3-phosphocholine + hexadecanoate + H(+). The enzyme catalyses 1-octadecanoyl-2-(9Z-octadecenoyl)-sn-glycero-3-phosphocholine + H2O = 2-(9Z-octadecenoyl)-sn-glycero-3-phosphocholine + octadecanoate + H(+). The catalysed reaction is 1-hexadecanoyl-2-(4Z,7Z,10Z,13Z,16Z,19Z-docosahexaenoyl)-sn-glycero-3-phosphocholine + H2O = 2-(4Z,7Z,10Z,13Z,16Z,19Z-docosahexaenoyl)-sn-glycero-3-phosphocholine + hexadecanoate + H(+). It catalyses the reaction 1-O-(1Z)-hexadecenyl-2 (5Z,8Z,11Z,14Z)-eicosatetraenoyl-sn-glycero-3-phosphocholine + H2O = 1-(1Z-hexadecenyl)-sn-glycero-3-phosphocholine + (5Z,8Z,11Z,14Z)-eicosatetraenoate + H(+). It carries out the reaction 1-O-(1Z-hexadecenyl)-2-(9Z-octadecenoyl)-sn-glycero-3-phosphocholine + H2O = 1-(1Z-hexadecenyl)-sn-glycero-3-phosphocholine + (9Z)-octadecenoate + H(+). The enzyme catalyses 1-hexadecanoyl-sn-glycero-3-phosphocholine + H2O = sn-glycerol 3-phosphocholine + hexadecanoate + H(+). The catalysed reaction is 1',3'-bis-[1,2-di-(9Z,12Z-octadecadienoyl)-sn-glycero-3-phospho]-glycerol + H2O = 1'-[1,2-di-(9Z,12Z-octadecadienoyl)-sn-glycero-3-phospho]-3'-[1-(9Z,12Z-octadecadienoyl)-sn-glycero-3-phospho]-glycerol + (9Z,12Z)-octadecadienoate + H(+). It catalyses the reaction 1'-[1-acyl-2-(9-hydroxy-(10E,12Z)-octadecadienoyl)-sn-glycero-3-phospho]-3'-[1,2-diacyl-sn-glycero-3-phospho]-glycerol + H2O = 9-hydroxy-(10E,12Z)-octadecadienoate + 1'-[1,2-diacyl-sn-glycero-3-phospho],3'-[1-acyl-sn-glycero-3-phospho]-glycerol + H(+). It participates in phospholipid metabolism. With respect to regulation, calcium-independent phospholipase. Inhibited by (E)-6-bromomethylene-3-1-naphthalenyl-2H-tetrahydropyran-2-one (BEL). The activity toward 1-hexadecanoyl-2-(5Z,8Z,11Z,14Z-eicosatetraenoyl)-sn-glycero-3-phosphocholine is stimulated by cardiolipin. In terms of biological role, calcium-independent and membrane-bound phospholipase, that catalyzes the esterolytic cleavage of fatty acids from glycerophospholipids to yield free fatty acids and lysophospholipids, hence regulating membrane physical properties and the release of lipid second messengers and growth factors. Hydrolyzes phosphatidylethanolamine, phosphatidylcholine and probably phosphatidylinositol with a possible preference for the former. Also has a broad substrate specificity in terms of fatty acid moieties, hydrolyzing saturated and mono-unsaturated fatty acids at nearly equal rates from either the sn-1 or sn-2 position in diacyl phosphatidylcholine. However, has a weak activity toward polyunsaturated fatty acids at the sn-2 position, and thereby favors the production of 2-arachidonoyl lysophosphatidylcholine, a key branch point metabolite in eicosanoid signaling. On the other hand, can produce arachidonic acid from the sn-1 position of diacyl phospholipid and from the sn-2 position of arachidonate-containing plasmalogen substrates. Therefore, plays an important role in the mobilization of arachidonic acid in response to cellular stimuli and the generation of lipid second messengers. Can also hydrolyze lysophosphatidylcholine. In the mitochondrial compartment, catalyzes the hydrolysis and release of oxidized aliphatic chains from cardiolipin and integrates mitochondrial bioenergetics and signaling. It is essential for maintaining efficient bioenergetic mitochondrial function through tailoring mitochondrial membrane lipid metabolism and composition. The chain is Calcium-independent phospholipase A2-gamma from Homo sapiens (Human).